The chain runs to 334 residues: Cytosolic Fe-S cluster assembly factor NUBP1 homolog (334 aa).

The tract at residues 1–24 is disordered; that stretch reads MSSAEVTAAAKPADAPEHCPGTAS. Positions 19, 33, 36, and 42 each coordinate [4Fe-4S] cluster. 72-79 is an ATP binding site; sequence GKGGVGKS. Residues cysteine 247 and cysteine 250 each contribute to the [4Fe-4S] cluster site.

Belongs to the Mrp/NBP35 ATP-binding proteins family. NUBP1/NBP35 subfamily. As to quaternary structure, heterotetramer of 2 NUBP1 and 2 NUBP2 chains. [4Fe-4S] cluster is required as a cofactor.

The protein resides in the cytoplasm. Functionally, component of the cytosolic iron-sulfur (Fe/S) protein assembly (CIA) machinery. Required for maturation of extramitochondrial Fe-S proteins. The NUBP1-NUBP2 heterotetramer forms a Fe-S scaffold complex, mediating the de novo assembly of an Fe-S cluster and its transfer to target apoproteins. This is Cytosolic Fe-S cluster assembly factor NUBP1 homolog from Culex quinquefasciatus (Southern house mosquito).